The primary structure comprises 301 residues: MDAFENMSVSNHPGGNARRNSQSANEMLASQIQDFQNIPRSFNDSNANVNLSKNCTVGNQLPFSSRQQKIIMEHLLITKNNSQQQKDYSHVPCKFFKMGNCQAGSSCPFSHSPDIISSANNLPCKYFAKGNCKFGNKCVNAHVLPNGFKMNSKEPIDITPPSQNNYLSHARSASFSTYTSPPLSAQTEFSHSASNANYFSSQYLMYSPQKSPEALYTEFFSPPSSSSSYINYSYNNSNINAYSPVSSSSSNIWQEQGQTTLSNPSVNQNLRYRTGPAIQEESDNEIEDLLIHNFNSRYCHE.

The segment at 1-25 (MDAFENMSVSNHPGGNARRNSQSAN) is disordered. Over residues 7 to 25 (MSVSNHPGGNARRNSQSAN) the composition is skewed to polar residues. 2 positions are modified to phosphoserine: S21 and S30. 2 consecutive C3H1-type zinc fingers follow at residues 87–114 (DYSH…HSPD) and 123–145 (PCKY…HVLP). S282 is subject to Phosphoserine.

This Saccharomyces cerevisiae (strain ATCC 204508 / S288c) (Baker's yeast) protein is Zinc finger protein LEE1 (LEE1).